Reading from the N-terminus, the 324-residue chain is Homoserine kinase (324 aa).

Residue 87–97 (PVARGMGSSAA) participates in ATP binding.

This sequence belongs to the GHMP kinase family. Homoserine kinase subfamily.

The protein resides in the cytoplasm. It catalyses the reaction L-homoserine + ATP = O-phospho-L-homoserine + ADP + H(+). Its pathway is amino-acid biosynthesis; L-threonine biosynthesis; L-threonine from L-aspartate: step 4/5. In terms of biological role, catalyzes the ATP-dependent phosphorylation of L-homoserine to L-homoserine phosphate. This Symbiobacterium thermophilum (strain DSM 24528 / JCM 14929 / IAM 14863 / T) protein is Homoserine kinase.